A 505-amino-acid polypeptide reads, in one-letter code: Maturase K (505 aa).

It belongs to the intron maturase 2 family. MatK subfamily.

It is found in the plastid. It localises to the chloroplast. Its function is as follows. Usually encoded in the trnK tRNA gene intron. Probably assists in splicing its own and other chloroplast group II introns. This Amaranthus greggii (Gregg's amaranth) protein is Maturase K.